The primary structure comprises 370 residues: Platelet-derived growth factor D (370 aa).

The signal sequence occupies residues 1–23; that stretch reads MQRLVLVSILLCANFSCYPDTFA. The CUB domain occupies 52–170; it reads REENIQVTSN…PGFKIYYSFV (119 aa). C109 and C131 are joined by a disulfide. N-linked (GlcNAc...) asparagine glycosylation occurs at N276. 2 disulfide bridges follow: C302–C360 and C306–C362.

The protein belongs to the PDGF/VEGF growth factor family. Homodimer; disulfide-linked. Interacts with PDGFRB homodimers, and with heterodimers formed by PDGFRA and PDGFRB. In terms of processing, activated by proteolytic cleavage. Proteolytic removal of the N-terminal CUB domain releasing the core domain is necessary for unmasking the receptor-binding epitopes of the core domain. Cleavage after Arg-247 or Arg-249 by urokinase plasminogen activator gives rise to the active form. In terms of tissue distribution, expressed at high levels in developing heart, lung, kidney and some muscle derivatives. Moderately expressed in liver, brain and testis. In the kidney, localized to glomerular mesangial cells and vascular smooth muscle cells. Up-regulated in areas of renal fibrosis. In mice with unilateral ureteral obstruction, expressed in interstitial cells at day 4, with an increased to maximal expression at day 14.

It is found in the secreted. Its function is as follows. Growth factor that plays an essential role in the regulation of embryonic development, cell proliferation, cell migration, survival and chemotaxis. Potent mitogen for cells of mesenchymal origin. Plays an important role in wound healing. Has oncogenic potential and can induce tumor formation. Induces macrophage recruitment, increased interstitial pressure, and blood vessel maturation during angiogenesis. Can initiate events that lead to a mesangial proliferative glomerulonephritis, including influx of monocytes and macrophages and production of extracellular matrix. In Mus musculus (Mouse), this protein is Platelet-derived growth factor D (Pdgfd).